Consider the following 76-residue polypeptide: Acyl carrier protein (76 aa).

Positions 1 to 75 constitute a Carrier domain; it reads MVLEKIKTLM…DVVLYIEKNL (75 aa). Residue Ser-35 is modified to O-(pantetheine 4'-phosphoryl)serine.

This sequence belongs to the acyl carrier protein (ACP) family. Post-translationally, 4'-phosphopantetheine is transferred from CoA to a specific serine of apo-ACP by AcpS. This modification is essential for activity because fatty acids are bound in thioester linkage to the sulfhydryl of the prosthetic group.

The protein localises to the cytoplasm. The protein operates within lipid metabolism; fatty acid biosynthesis. In terms of biological role, carrier of the growing fatty acid chain in fatty acid biosynthesis. The protein is Acyl carrier protein of Phytoplasma australiense.